The chain runs to 248 residues: (2S)-[(R)-hydroxy(phenyl)methyl]succinyl-CoA dehydrogenase subunit BbsD (248 aa).

Ser-15, Asp-36, Asp-62, Ile-63, Asn-89, Tyr-153, and Lys-157 together coordinate NAD(+). The active-site Proton acceptor is Tyr-153.

The protein belongs to the short-chain dehydrogenases/reductases (SDR) family. In terms of assembly, heterotetramer composed of 2 inactive BbsC subunits and 2 active BbsD subunits.

It carries out the reaction (2S)-[(R)-hydroxy(phenyl)methyl]succinyl-CoA + NAD(+) = (S)-2-benzoylsuccinyl-CoA + NADH + H(+). Its pathway is xenobiotic degradation; toluene degradation. With respect to regulation, activity is probably regulated by the inactive BbsC subunit. Functionally, involved in an anaerobic toluene degradation pathway. Active subunit that catalyzes the oxidation of 2-(alpha-hydroxybenzyl)succinyl-CoA to 2-benzoylsuccinyl-CoA. In vitro, can catalyze the NADH-dependent reduction of the artificial substrates 2,2-dichloroacetophene and 2,4'-dichloroacetophenone. This is (2S)-[(R)-hydroxy(phenyl)methyl]succinyl-CoA dehydrogenase subunit BbsD from Thauera aromatica.